Reading from the N-terminus, the 129-residue chain is Prefoldin subunit alpha (129 aa).

Belongs to the prefoldin alpha subunit family. As to quaternary structure, heterohexamer of two alpha and four beta subunits.

It localises to the cytoplasm. Functionally, molecular chaperone capable of stabilizing a range of proteins. Seems to fulfill an ATP-independent, HSP70-like function in archaeal de novo protein folding. In Thermofilum pendens (strain DSM 2475 / Hrk 5), this protein is Prefoldin subunit alpha.